Consider the following 291-residue polypeptide: Elongation factor Ts (291 aa).

The tract at residues 79–82 (TDFV) is involved in Mg(2+) ion dislocation from EF-Tu.

Belongs to the EF-Ts family.

It is found in the cytoplasm. Its function is as follows. Associates with the EF-Tu.GDP complex and induces the exchange of GDP to GTP. It remains bound to the aminoacyl-tRNA.EF-Tu.GTP complex up to the GTP hydrolysis stage on the ribosome. This is Elongation factor Ts from Roseobacter denitrificans (strain ATCC 33942 / OCh 114) (Erythrobacter sp. (strain OCh 114)).